The primary structure comprises 326 residues: Type II secretion system protein K (326 aa).

A propeptide spans 1–7 (MNHRQRG) (leader sequence). The chain crosses the membrane as a helical span at residues 8–28 (IALLMVLLILALMMVLASAMT). Over 29–326 (ERSARMYQQT…RYGIYWVADE (298 aa)) the chain is Periplasmic.

Belongs to the GSP K family. Type II secretion is composed of four main components: the outer membrane complex, the inner membrane complex, the cytoplasmic secretion ATPase and the periplasm-spanning pseudopilus. Interacts with core component PulG. Post-translationally, cleaved by prepilin peptidase.

It is found in the cell inner membrane. In terms of biological role, component of the type II secretion system required for the energy-dependent secretion of extracellular factors such as proteases and toxins from the periplasm. Plays a role in pseudopilus assembly and seems to control its length. Interacts with the pseudopilus tip complex that is critical for the recognition and binding of secretion substrates. This Klebsiella pneumoniae protein is Type II secretion system protein K (pulK).